A 201-amino-acid chain; its full sequence is Lipoprotein signal peptidase (201 aa).

A run of 2 helical transmembrane segments spans residues 73-93 (SNAI…YLMI) and 97-117 (TIGS…NLID). Catalysis depends on residues aspartate 126 and aspartate 144. The helical transmembrane segment at 135–155 (YSFPVFNLADCFITIGVIILI) threads the bilayer.

Belongs to the peptidase A8 family.

It is found in the cell inner membrane. The enzyme catalyses Release of signal peptides from bacterial membrane prolipoproteins. Hydrolyzes -Xaa-Yaa-Zaa-|-(S,diacylglyceryl)Cys-, in which Xaa is hydrophobic (preferably Leu), and Yaa (Ala or Ser) and Zaa (Gly or Ala) have small, neutral side chains.. It participates in protein modification; lipoprotein biosynthesis (signal peptide cleavage). In terms of biological role, this protein specifically catalyzes the removal of signal peptides from prolipoproteins. This chain is Lipoprotein signal peptidase, found in Rickettsia africae (strain ESF-5).